Here is a 148-residue protein sequence, read N- to C-terminus: Helix-loop-helix protein 14 (148 aa).

Disordered stretches follow at residues 1–21 (MAKK…HQVN), 63–83 (DPQQ…NSNN), and 112–132 (GDVS…SYSP). The tract at residues 4-17 (KNQVARNERERKRV) is basic motif. The region spanning 4–56 (KNQVARNERERKRVHQVNHGFDVLRNRLQPKNHTKKWSKADTLREAVKYIQQL) is the bHLH domain. The helix-loop-helix motif stretch occupies residues 18 to 56 (HQVNHGFDVLRNRLQPKNHTKKWSKADTLREAVKYIQQL). Residues 63-78 (DPQQPSVSSSTPDYTM) show a composition bias toward polar residues. Over residues 120–132 (SPTSSVSSSSYSP) the composition is skewed to low complexity.

It localises to the nucleus. In terms of biological role, probable transcription factor, involved in determining neuroblast cell fate, morphogenesis and aspects of terminal differentiation in both left/right symmetric and asymmetric neuronal lineages. The chain is Helix-loop-helix protein 14 from Caenorhabditis elegans.